A 374-amino-acid chain; its full sequence is Guanine nucleotide-binding protein subunit alpha-15 (374 aa).

The G-alpha domain maps to 41 to 374 (GELKLLLLGP…ARYLDEINLL (334 aa)). A G1 motif region spans residues 44–57 (KLLLLGPGESGKST). GTP is bound by residues 49 to 56 (GPGESGKS), 183 to 189 (LRSRMPT), 208 to 212 (DAGGQ), 277 to 280 (NKTD), and Ala-346. Mg(2+) contacts are provided by Ser-56 and Thr-189. The G2 motif stretch occupies residues 181-189 (DVLRSRMPT). Residues 204 to 213 (LRIVDAGGQK) are G3 motif. The G4 motif stretch occupies residues 273 to 280 (ILFLNKTD). Residues 344-349 (TCATDT) form a G5 motif region.

The protein belongs to the G-alpha family. G(q) subfamily. In terms of assembly, g proteins are composed of 3 units; alpha, beta and gamma. The alpha chain contains the guanine nucleotide binding site.

Guanine nucleotide-binding proteins (G proteins) are involved as modulators or transducers in various transmembrane signaling systems. This is Guanine nucleotide-binding protein subunit alpha-15 (Gna15) from Rattus norvegicus (Rat).